Reading from the N-terminus, the 349-residue chain is Terpene cyclase janA (349 aa).

Asn80 carries N-linked (GlcNAc...) asparagine glycosylation. 6 helical membrane-spanning segments follow: residues Leu81 to Leu101, Leu116 to Ile136, Ile155 to Leu175, Leu189 to Tyr209, Ile223 to Ala243, and Val308 to Leu328.

It belongs to the membrane-bound ascI terpene cyclase family.

The protein resides in the membrane. It participates in secondary metabolite biosynthesis. Functionally, part of the gene cluster that mediates the biosynthesis of the indole diterpenes janthitremanes such as shearinine K or shearinine A. The geranylgeranyl diphosphate (GGPP) synthase janG catalyzes the first step in janthitremane biosynthesis via conversion of farnesyl pyrophosphate and isopentyl pyrophosphate into geranylgeranyl pyrophosphate (GGPP). Condensation of indole-3-glycerol phosphate with GGPP by the prenyl transferase janC then forms 3-geranylgeranylindole (3-GGI). Epoxidation by the FAD-dependent monooxygenase janM leads to a epoxidized-GGI that is substrate of the terpene cyclase janB for cyclization to yield paspaline. Paspaline is subsequently converted to 13-desoxypaspaline by the cytochrome P450 monooxygenase janP, via beta-PC-M6 in a series of alpha-face oxidations. The cytochrome P450 monooxygenase janQ is proposed to carry out sequential beta-face oxidation steps at C-7 and C-13 of 13-desoxypaspaline to form paspalicine and paspalinine respectively. The indole diterpene prenyltransferase janD may then convert paspalinine into shearinine K which is substrate of janO and/or additional enzymes for oxidation and cyclization to generate shearinine A. This chain is Terpene cyclase janA, found in Penicillium janthinellum (Penicillium vitale).